We begin with the raw amino-acid sequence, 460 residues long: Ribosomal protein uS12 methylthiotransferase RimO (460 aa).

In terms of domain architecture, MTTase N-terminal spans N16–S130. Residues C25, C61, C93, C164, C168, and C171 each coordinate [4Fe-4S] cluster. In terms of domain architecture, Radical SAM core spans S150–K382. In terms of domain architecture, TRAM spans K385 to N455.

This sequence belongs to the methylthiotransferase family. RimO subfamily. It depends on [4Fe-4S] cluster as a cofactor.

It localises to the cytoplasm. It catalyses the reaction L-aspartate(89)-[ribosomal protein uS12]-hydrogen + (sulfur carrier)-SH + AH2 + 2 S-adenosyl-L-methionine = 3-methylsulfanyl-L-aspartate(89)-[ribosomal protein uS12]-hydrogen + (sulfur carrier)-H + 5'-deoxyadenosine + L-methionine + A + S-adenosyl-L-homocysteine + 2 H(+). In terms of biological role, catalyzes the methylthiolation of an aspartic acid residue of ribosomal protein uS12. This chain is Ribosomal protein uS12 methylthiotransferase RimO, found in Chlamydia abortus (strain DSM 27085 / S26/3) (Chlamydophila abortus).